Consider the following 252-residue polypeptide: Imidazole glycerol phosphate synthase subunit HisF (252 aa).

Residues D11 and D130 contribute to the active site.

This sequence belongs to the HisA/HisF family. In terms of assembly, heterodimer of HisH and HisF.

It is found in the cytoplasm. It catalyses the reaction 5-[(5-phospho-1-deoxy-D-ribulos-1-ylimino)methylamino]-1-(5-phospho-beta-D-ribosyl)imidazole-4-carboxamide + L-glutamine = D-erythro-1-(imidazol-4-yl)glycerol 3-phosphate + 5-amino-1-(5-phospho-beta-D-ribosyl)imidazole-4-carboxamide + L-glutamate + H(+). Its pathway is amino-acid biosynthesis; L-histidine biosynthesis; L-histidine from 5-phospho-alpha-D-ribose 1-diphosphate: step 5/9. Functionally, IGPS catalyzes the conversion of PRFAR and glutamine to IGP, AICAR and glutamate. The HisF subunit catalyzes the cyclization activity that produces IGP and AICAR from PRFAR using the ammonia provided by the HisH subunit. This Hydrogenobaculum sp. (strain Y04AAS1) protein is Imidazole glycerol phosphate synthase subunit HisF.